The chain runs to 344 residues: Selenide, water dikinase (344 aa).

Sec16 is an active-site residue. Residue Sec16 is a non-standard amino acid, selenocysteine. ATP-binding positions include Lys19 and 46–48 (TND). Residue Asp49 coordinates Mg(2+). ATP-binding positions include Asp66, Asp89, and 135–137 (GHT). Asp89 serves as a coordination point for Mg(2+). Asp223 serves as a coordination point for Mg(2+).

It belongs to the selenophosphate synthase 1 family. Class I subfamily. Homodimer. Mg(2+) is required as a cofactor.

The catalysed reaction is hydrogenselenide + ATP + H2O = selenophosphate + AMP + phosphate + 2 H(+). Functionally, synthesizes selenophosphate from selenide and ATP. This Caldanaerobacter subterraneus subsp. tengcongensis (strain DSM 15242 / JCM 11007 / NBRC 100824 / MB4) (Thermoanaerobacter tengcongensis) protein is Selenide, water dikinase.